Consider the following 738-residue polypeptide: 1,4-alpha-glucan branching enzyme GlgB (738 aa).

Asp-399 acts as the Nucleophile in catalysis. Glu-452 serves as the catalytic Proton donor.

It belongs to the glycosyl hydrolase 13 family. GlgB subfamily. As to quaternary structure, monomer.

The enzyme catalyses Transfers a segment of a (1-&gt;4)-alpha-D-glucan chain to a primary hydroxy group in a similar glucan chain.. It participates in glycan biosynthesis; glycogen biosynthesis. In terms of biological role, catalyzes the formation of the alpha-1,6-glucosidic linkages in glycogen by scission of a 1,4-alpha-linked oligosaccharide from growing alpha-1,4-glucan chains and the subsequent attachment of the oligosaccharide to the alpha-1,6 position. The protein is 1,4-alpha-glucan branching enzyme GlgB of Chlamydia trachomatis serovar L2 (strain ATCC VR-902B / DSM 19102 / 434/Bu).